The sequence spans 147 residues: Deoxyuridine 5'-triphosphate nucleotidohydrolase (147 aa).

Position 24 (R24) interacts with Mg(2+). DUTP is bound by residues 68–70 (PRS), 82–85 (GVID), Y88, G93, I95, and R111.

Belongs to the dUTPase family.

It catalyses the reaction dUTP + H2O = dUMP + diphosphate + H(+). Functionally, this enzyme is involved in nucleotide metabolism: it produces dUMP, the immediate precursor of thymidine nucleotides and it decreases the intracellular concentration of dUTP so that uracil cannot be incorporated into DNA. This Homo sapiens (Human) protein is Deoxyuridine 5'-triphosphate nucleotidohydrolase (OPG046).